We begin with the raw amino-acid sequence, 335 residues long: Succinylglutamate desuccinylase (335 aa).

The Zn(2+) site is built by His59, Glu62, and His151. Residue Glu215 is part of the active site.

This sequence belongs to the AspA/AstE family. Succinylglutamate desuccinylase subfamily. It depends on Zn(2+) as a cofactor.

The enzyme catalyses N-succinyl-L-glutamate + H2O = L-glutamate + succinate. Its pathway is amino-acid degradation; L-arginine degradation via AST pathway; L-glutamate and succinate from L-arginine: step 5/5. Transforms N(2)-succinylglutamate into succinate and glutamate. The protein is Succinylglutamate desuccinylase of Pseudomonas syringae pv. tomato (strain ATCC BAA-871 / DC3000).